Here is a 216-residue protein sequence, read N- to C-terminus: Dual specificity protein phosphatase VP2 (216 aa).

The tract at residues 1–50 (MHGNGGQPAAGGSESALSREGQPGPSGAAQGQVISNERSPRRYSTRTING) is disordered. Residues 21-32 (GQPGPSGAAQGQ) show a composition bias toward low complexity. Cys95 functions as the Phosphocysteine intermediate in the catalytic mechanism. A disordered region spans residues 165–187 (DREADFTPSEEDGGTTSSDFDED). Positions 172-187 (PSEEDGGTTSSDFDED) are enriched in acidic residues.

The protein belongs to the gyrovirus protein VP2 family.

It catalyses the reaction O-phospho-L-tyrosyl-[protein] + H2O = L-tyrosyl-[protein] + phosphate. It carries out the reaction O-phospho-L-seryl-[protein] + H2O = L-seryl-[protein] + phosphate. The catalysed reaction is O-phospho-L-threonyl-[protein] + H2O = L-threonyl-[protein] + phosphate. Functionally, may act as a scaffold protein in virion assembly. May also play a role in intracellular signaling during viral replication. The sequence is that of Dual specificity protein phosphatase VP2 (VP2) from Gallus gallus (Chicken).